Consider the following 146-residue polypeptide: UPF0178 protein CTC_02403 (146 aa).

The protein belongs to the UPF0178 family.

The polypeptide is UPF0178 protein CTC_02403 (Clostridium tetani (strain Massachusetts / E88)).